A 308-amino-acid polypeptide reads, in one-letter code: MSAQKPGLHPRNRHHSRYDLATLCQVNPELRQFLTLTPAGEQSVDFANPLAVKALNKALLAHFYAVANWDIPDGFLCPPVPGRADYIHHLADLLAEATGSIPANASILDIGVGANCIYPLIGVHEYGWRFTGSETSSQALSSAQAIISANPGLNRAIRLRRQKESGAIFNGIIHKNEQYDATLCNPPFHDSAAAARAGSERKRRNLGLNKDDVLNFGGQQQELWCEGGEVAFIKKMIEESKGFAKQVMWFTSLVSRGENLPPLYRALTDVGAVKVVKKEMAQGQKQSRFIAWTFMNDEQRRRFVNRQR.

This sequence belongs to the methyltransferase superfamily. METTL16/RlmF family.

The protein localises to the cytoplasm. It catalyses the reaction adenosine(1618) in 23S rRNA + S-adenosyl-L-methionine = N(6)-methyladenosine(1618) in 23S rRNA + S-adenosyl-L-homocysteine + H(+). Specifically methylates the adenine in position 1618 of 23S rRNA. In Escherichia coli O17:K52:H18 (strain UMN026 / ExPEC), this protein is Ribosomal RNA large subunit methyltransferase F.